Consider the following 318-residue polypeptide: Taste receptor type 2 member 60 (318 aa).

The Extracellular segment spans residues 1–7; it reads MNGDHMV. Residues 8–28 traverse the membrane as a helical segment; it reads LGSSVTDKKAIILVTILLLLR. Residues 29-40 lie on the Cytoplasmic side of the membrane; the sequence is LVAIAGNGFITA. Residues 41 to 61 traverse the membrane as a helical segment; sequence ALGVEWVLRRMLLPCDKLLVS. Over 62-88 the chain is Extracellular; sequence LGASHFCLQSVVMGKTIYVFLYPMAFP. A helical membrane pass occupies residues 89 to 109; the sequence is YNPVLQFLAFQWDFLNAATLW. Residues 110–128 lie on the Cytoplasmic side of the membrane; that stretch reads FSTWLSVFYCVKIATFTHP. A helical membrane pass occupies residues 129-149; it reads VFFWLKHKLSGWLPWMVFSYV. Topologically, residues 150–183 are extracellular; the sequence is GLSSFTTILFFIGNHRMYQNYLKNHLQPWNVTGN. An N-linked (GlcNAc...) asparagine glycan is attached at Asn179. A helical membrane pass occupies residues 184-204; sequence SIRSYCEKFYLFPLKMITWTM. Over 205–234 the chain is Cytoplasmic; the sequence is PTAVFFICMILLITSLGRHMKKALLTTSGF. Residues 235-255 form a helical membrane-spanning segment; the sequence is REPSVQAHIKALLALLSFAML. The Extracellular portion of the chain corresponds to 256–264; that stretch reads FISYFLSLV. Residues 265-285 traverse the membrane as a helical segment; it reads FSAAGIFPPLDFKFWVWESVI. The Cytoplasmic portion of the chain corresponds to 286–318; the sequence is YLCAAVHPIILLFSNCRLRAVLKSRRSSRCGTP.

This sequence belongs to the G-protein coupled receptor T2R family.

Its subcellular location is the membrane. Functionally, receptor that may play a role in the perception of bitterness and is gustducin-linked. May play a role in sensing the chemical composition of the gastrointestinal content. The activity of this receptor may stimulate alpha gustducin, mediate PLC-beta-2 activation and lead to the gating of TRPM5. This Pan troglodytes (Chimpanzee) protein is Taste receptor type 2 member 60 (TAS2R60).